Here is a 456-residue protein sequence, read N- to C-terminus: Bifunctional protein GlmU (456 aa).

Residues 1-228 form a pyrophosphorylase region; sequence MSARLAAIVL…PQEIFGINDR (228 aa). Residues 10-13, lysine 24, glutamine 75, and 80-81 contribute to the UDP-N-acetyl-alpha-D-glucosamine site; these read LAAG and GT. Aspartate 105 serves as a coordination point for Mg(2+). Glycine 142, glutamate 157, asparagine 172, and asparagine 226 together coordinate UDP-N-acetyl-alpha-D-glucosamine. Mg(2+) is bound at residue asparagine 226. Positions 229–249 are linker; sequence LQLSQASRILNERTLVGLMLS. Residues 250 to 456 are N-acetyltransferase; the sequence is GVTIVDPLRV…KAPYERTEDG (207 aa). The UDP-N-acetyl-alpha-D-glucosamine site is built by arginine 331 and lysine 349. Histidine 361 (proton acceptor) is an active-site residue. 2 residues coordinate UDP-N-acetyl-alpha-D-glucosamine: tyrosine 364 and asparagine 375. Acetyl-CoA is bound by residues alanine 378, 384–385, alanine 421, and arginine 437; that span reads NY.

This sequence in the N-terminal section; belongs to the N-acetylglucosamine-1-phosphate uridyltransferase family. In the C-terminal section; belongs to the transferase hexapeptide repeat family. As to quaternary structure, homotrimer. Mg(2+) is required as a cofactor.

It is found in the cytoplasm. It catalyses the reaction alpha-D-glucosamine 1-phosphate + acetyl-CoA = N-acetyl-alpha-D-glucosamine 1-phosphate + CoA + H(+). The enzyme catalyses N-acetyl-alpha-D-glucosamine 1-phosphate + UTP + H(+) = UDP-N-acetyl-alpha-D-glucosamine + diphosphate. The protein operates within nucleotide-sugar biosynthesis; UDP-N-acetyl-alpha-D-glucosamine biosynthesis; N-acetyl-alpha-D-glucosamine 1-phosphate from alpha-D-glucosamine 6-phosphate (route II): step 2/2. It functions in the pathway nucleotide-sugar biosynthesis; UDP-N-acetyl-alpha-D-glucosamine biosynthesis; UDP-N-acetyl-alpha-D-glucosamine from N-acetyl-alpha-D-glucosamine 1-phosphate: step 1/1. Its pathway is bacterial outer membrane biogenesis; LPS lipid A biosynthesis. In terms of biological role, catalyzes the last two sequential reactions in the de novo biosynthetic pathway for UDP-N-acetylglucosamine (UDP-GlcNAc). The C-terminal domain catalyzes the transfer of acetyl group from acetyl coenzyme A to glucosamine-1-phosphate (GlcN-1-P) to produce N-acetylglucosamine-1-phosphate (GlcNAc-1-P), which is converted into UDP-GlcNAc by the transfer of uridine 5-monophosphate (from uridine 5-triphosphate), a reaction catalyzed by the N-terminal domain. The polypeptide is Bifunctional protein GlmU (Gloeobacter violaceus (strain ATCC 29082 / PCC 7421)).